A 905-amino-acid polypeptide reads, in one-letter code: Probable cation-transporting ATPase F (905 aa).

Helical transmembrane passes span 84 to 104, 248 to 268, and 283 to 303; these read EFVD…VGFI, FSKF…GVGL, and ALAV…TLAI. D333 functions as the 4-aspartylphosphate intermediate in the catalytic mechanism. Residues D643 and D647 each coordinate Mg(2+). The next 6 helical transmembrane spans lie at 716-736, 738-758, 778-798, 808-828, 842-862, and 872-892; these read ILAA…ILWI, MTTA…AGIM, TLLV…WELD, TAAL…CRSL, WIIL…YLPA, and IDIG…IVVA.

Belongs to the cation transport ATPase (P-type) (TC 3.A.3) family. Type IIA subfamily.

The protein resides in the cell membrane. It catalyses the reaction ATP + H2O = ADP + phosphate + H(+). This Mycobacterium bovis (strain ATCC BAA-935 / AF2122/97) protein is Probable cation-transporting ATPase F (ctpF).